The chain runs to 127 residues: MASKSVVVLLFLALIASSAIAQAPGPAPTRSPLPSPAQPPRTAAPTPSITPTPTPTPSATPTAAPVSPPAGSPLPSSASPPAPPTSLTPDGAPVAGPTGSTPVDNNNAATLAAGSLAGFVFVASLLL.

A signal peptide spans 1-21 (MASKSVVVLLFLALIASSAIA). A Pyrrolidone carboxylic acid modification is found at Gln22. Positions 22–107 (QAPGPAPTRS…TGSTPVDNNN (86 aa)) are disordered. A 4-hydroxyproline mark is found at Pro24, Pro26, Pro28, Pro32, and Pro36. O-linked (Ara...) hydroxyproline glycans are attached at residues Pro24, Pro26, Pro28, Pro32, and Pro36. Pro residues-rich tracts occupy residues 25-39 (GPAP…PAQP), 48-58 (SITPTPTPTPS), and 66-86 (VSPP…PPTS). Positions 98–107 (TGSTPVDNNN) are enriched in polar residues. The GPI-anchor amidated asparagine moiety is linked to residue Asn107. A propeptide spans 108–127 (AATLAAGSLAGFVFVASLLL) (removed in mature form).

It belongs to the classical AGP family. In terms of processing, O-glycosylated on hydroxyprolines; noncontiguous hydroxylproline residues are glycosylated with arabinogalactan. In terms of tissue distribution, predominantly expressed in flowers and at a lower level in roots and siliques.

The protein localises to the cell membrane. In terms of biological role, proteoglycan that seems to be implicated in diverse developmental roles such as differentiation, cell-cell recognition, embryogenesis and programmed cell death. The protein is Classical arabinogalactan protein 10 (AGP10) of Arabidopsis thaliana (Mouse-ear cress).